Here is a 21-residue protein sequence, read N- to C-terminus: Magainin-B1 (21 aa).

In terms of tissue distribution, expressed by the skin glands.

It is found in the secreted. Functionally, has no antimicrobial activity against tested bacteria. The protein is Magainin-B1 of Xenopus borealis (Kenyan clawed frog).